Here is a 387-residue protein sequence, read N- to C-terminus: MIVNIASPLYGSVQGFRRLDFSLYATVAILISVGIVMVASSSLDFAAERYHDTWFFVRKQITFLAMGLVGGLVILAVPMSVWNKYSGLLLILAFFLLMAVLIPGIGKVVNGSRRWLSLGPFSMQASEIAKFCLIVYFASYLARRNEELRTQWSGFLKLTAVLLIIVLLLLLEPDFGSSVVISATLGCMMFVAGVPLARFLLLAVSGVAGLALMAVASPYRWERLVAFMDPWATQFDSGYQLVQSLIAFGRGGWFGVGLGNSLQKLFFLPEAHTDFIFAIFTEEFGFIGAIALIGVFGFFLYRLVILFRRASEQEQFFSSYVVFGIGVMLAMQAFINMGVASGFLPTKGLTLPFISYGGSSLLITCGLMALVFRVNLELNRENQEGKP.

9 helical membrane-spanning segments follow: residues 19–39 (LDFS…VMVA), 61–81 (ITFL…PMSV), 86–106 (SGLL…PGIG), 118–138 (LGPF…VYFA), 161–181 (VLLI…SVVI), 199–219 (FLLL…ASPY), 286–306 (FIGA…LVIL), 320–340 (YVVF…MGVA), and 352–372 (PFIS…ALVF).

It belongs to the SEDS family. FtsW subfamily.

The protein resides in the cell inner membrane. It catalyses the reaction [GlcNAc-(1-&gt;4)-Mur2Ac(oyl-L-Ala-gamma-D-Glu-L-Lys-D-Ala-D-Ala)](n)-di-trans,octa-cis-undecaprenyl diphosphate + beta-D-GlcNAc-(1-&gt;4)-Mur2Ac(oyl-L-Ala-gamma-D-Glu-L-Lys-D-Ala-D-Ala)-di-trans,octa-cis-undecaprenyl diphosphate = [GlcNAc-(1-&gt;4)-Mur2Ac(oyl-L-Ala-gamma-D-Glu-L-Lys-D-Ala-D-Ala)](n+1)-di-trans,octa-cis-undecaprenyl diphosphate + di-trans,octa-cis-undecaprenyl diphosphate + H(+). It participates in cell wall biogenesis; peptidoglycan biosynthesis. Its function is as follows. Peptidoglycan polymerase that is essential for cell division. The sequence is that of Probable peptidoglycan glycosyltransferase FtsW from Saccharophagus degradans (strain 2-40 / ATCC 43961 / DSM 17024).